A 140-amino-acid chain; its full sequence is Small ribosomal subunit protein eS12 (140 aa).

The protein belongs to the eukaryotic ribosomal protein eS12 family. In terms of assembly, part of the small subunit (SSU) processome, composed of more than 70 proteins and the RNA chaperone small nucleolar RNA (snoRNA) U3. Subunit of the 40S ribosomal complex.

It is found in the nucleus. The protein resides in the nucleolus. Part of the small subunit (SSU) processome, first precursor of the small eukaryotic ribosomal subunit. During the assembly of the SSU processome in the nucleolus, many ribosome biogenesis factors, an RNA chaperone and ribosomal proteins associate with the nascent pre-rRNA and work in concert to generate RNA folding, modifications, rearrangements and cleavage as well as targeted degradation of pre-ribosomal RNA by the RNA exosome. Subunit of the 40S ribosomal complex. Involved in cold-warm shock-induced translocation of the RNA exosome components from the nucleolus to nucleoplasm. This Caenorhabditis elegans protein is Small ribosomal subunit protein eS12 (rps-12).